Reading from the N-terminus, the 61-residue chain is Metallothionein-2 (61 aa).

Met1 bears the N-acetylmethionine mark. Residues Met1–Cys29 are beta. A divalent metal cation-binding residues include Cys5, Cys7, Cys13, Cys15, Cys19, Cys21, Cys24, Cys26, Cys29, Cys33, Cys34, Cys36, Cys37, Cys41, Cys44, Cys48, Cys50, and Cys57. Residues Lys30–Ala61 are alpha. At Ser58 the chain carries Phosphoserine. 2 residues coordinate a divalent metal cation: Cys59 and Cys60.

It belongs to the metallothionein superfamily. Type 1 family.

Its function is as follows. Metallothioneins have a high content of cysteine residues that bind various heavy metals; these proteins are transcriptionally regulated by both heavy metals and glucocorticoids. This chain is Metallothionein-2 (Mt2), found in Mus musculus (Mouse).